Here is a 535-residue protein sequence, read N- to C-terminus: MSLSRSEEMHRLTENVYKTIMEQFNPSLRNFIAMGKNYEKALAGVTFAAKGYFDALVKMGELASESQGSKELGDVLFQMAEVHRQIQNQLEETLKSFHNELLTQLEQKVELDSRYLSAALKKYQTEQRSKGDALDKCQAELKKLRKKSQGSKNPQKYSDKELQYIDAISNKQGELENYVSDGYKTALTEERRRFCFLVEKQCAVAKNSAAYHSKGKELLAQKLPLWQQACADPNKIPDRAVQLMQQMANSNGSILPSALSASKSNLVISDPIPGAKPLPVPPELAPFVGRMSAQENVPVMNGVAGPDSEDYNPWADRKAAQPKSLSPPQSQSKLSDSYSNTLPVRKSVTPKNSYATTENKTLPRSSSMAAGLERNGRMRVKAIFSHAAGDNSTLLSFKEGDLITLLVPEARDGWHYGESEKTKMRGWFPFSYTRVLDSDGSDRLHMSLQQGKSSSTGNLLDKDDLALPPPDYGTSSRAFPTQTAGTFKQRPYSVAVPAFSQGLDDYGARSVSRNPFANVHLKPTVTNDRSAPLLS.

The IMD domain occupies 1-250; it reads MSLSRSEEMH…VQLMQQMANS (250 aa). The stretch at 88-153 forms a coiled coil; it reads NQLEETLKSF…LRKKSQGSKN (66 aa). 4 positions are modified to phosphoserine: Ser-262, Ser-324, Ser-326, and Ser-337. The disordered stretch occupies residues 299–370; it reads VMNGVAGPDS…TLPRSSSMAA (72 aa). A compositionally biased stretch (low complexity) spans 321–335; that stretch reads QPKSLSPPQSQSKLS. Phosphothreonine is present on Thr-341. Residue Ser-347 is modified to Phosphoserine. The span at 349 to 368 shows a compositional bias: polar residues; that stretch reads TPKNSYATTENKTLPRSSSM. Thr-361 is modified (phosphothreonine). 4 positions are modified to phosphoserine: Ser-367, Ser-385, Ser-396, and Ser-455. An SH3 domain is found at 375 to 438; that stretch reads NGRMRVKAIF…PFSYTRVLDS (64 aa). The disordered stretch occupies residues 445 to 477; it reads HMSLQQGKSSSTGNLLDKDDLALPPPDYGTSSR. Residues 447 to 458 show a composition bias toward polar residues; sequence SLQQGKSSSTGN.

In terms of assembly, homodimer. Interacts with CDC42 and RAC1 that have been activated by GTP binding. Binds DIAPH1. Interacts with ATN1, ADGRB1, SHANK1, SHANK2, SHANK3, TIAM1, WASF1 and WASF2. Interacts with ENAH after recruitment of CDC42. Interacts with EPS8. Post-translationally, phosphorylated on tyrosine residues by INSR in response to insulin treatment. As to expression, detected in liver, brain, olfactory bulb, brain cortex, caudate putamen, hypothalamus and cerebellum.

Its subcellular location is the cytoplasm. The protein localises to the membrane. It is found in the cell projection. It localises to the filopodium. The protein resides in the ruffle. Its subcellular location is the cytoskeleton. Its function is as follows. Adapter protein that links membrane-bound small G-proteins to cytoplasmic effector proteins. Necessary for CDC42-mediated reorganization of the actin cytoskeleton and for RAC1-mediated membrane ruffling. Involved in the regulation of the actin cytoskeleton by WASF family members and the Arp2/3 complex. Plays a role in neurite growth. Acts syngeristically with ENAH to promote filipodia formation. Plays a role in the reorganization of the actin cytoskeleton in response to bacterial infection. Participates in actin bundling when associated with EPS8, promoting filopodial protrusions. This Mus musculus (Mouse) protein is BAR/IMD domain-containing adapter protein 2 (Baiap2).